Reading from the N-terminus, the 311-residue chain is Methionyl-tRNA formyltransferase (311 aa).

Residue 109–112 (SLLP) participates in (6S)-5,6,7,8-tetrahydrofolate binding.

Belongs to the Fmt family.

The enzyme catalyses L-methionyl-tRNA(fMet) + (6R)-10-formyltetrahydrofolate = N-formyl-L-methionyl-tRNA(fMet) + (6S)-5,6,7,8-tetrahydrofolate + H(+). Its function is as follows. Attaches a formyl group to the free amino group of methionyl-tRNA(fMet). The formyl group appears to play a dual role in the initiator identity of N-formylmethionyl-tRNA by promoting its recognition by IF2 and preventing the misappropriation of this tRNA by the elongation apparatus. The sequence is that of Methionyl-tRNA formyltransferase from Staphylococcus aureus (strain MW2).